A 289-amino-acid chain; its full sequence is Probable aquaporin PIP-type 7a (289 aa).

Residues Met1–Pro39 form a disordered region. The Cytoplasmic portion of the chain corresponds to Met1–Gly57. Residues Ile58–Val78 traverse the membrane as a helical segment. The Extracellular portion of the chain corresponds to Val79 to Gln91. The chain crosses the membrane as a helical span at residues Gly92–Ser112. The Cytoplasmic portion of the chain corresponds to Gly113 to Ala135. The NPA 1 motif lies at Asn117–Ala119. The helical transmembrane segment at Ile136–Phe156 threads the bilayer. Residues Glu157–Lys178 lie on the Extracellular side of the membrane. Residues Gly179 to Ala199 traverse the membrane as a helical segment. The Cytoplasmic portion of the chain corresponds to Thr200–Pro212. A helical membrane pass occupies residues Ile213–Ile233. The Extracellular portion of the chain corresponds to Thr234–Trp260. The NPA 2 motif lies at Asn239–Ala241. The helical transmembrane segment at Ile261–Ile281 threads the bilayer. At Arg282–Lys289 the chain is on the cytoplasmic side.

The protein belongs to the MIP/aquaporin (TC 1.A.8) family. PIP (TC 1.A.8.11) subfamily.

The protein localises to the cell membrane. Its function is as follows. Aquaporins facilitate the transport of water and small neutral solutes across cell membranes. This chain is Probable aquaporin PIP-type 7a (TRG-31), found in Pisum sativum (Garden pea).